The primary structure comprises 1807 residues: Nucleoporin nup189 (1807 aa).

Residues 1 to 118 (MFGQNNSSGF…SGGGLFGSNT (118 aa)) form a disordered region. GLFG repeat units lie at residues 26–29 (GLFG) and 66–69 (GLFG). Positions 29-61 (GSNSNTPGNTLFGSQNTSTTGFGQNTTQPLFGS) are enriched in polar residues. Low complexity predominate over residues 62 to 77 (NTNGGLFGNRNNTTTT). The span at 78 to 90 (GGTGFGMSSGTGM) shows a compositional bias: gly residues. Over residues 93-108 (QSNTPAFGGTNNATNP) the composition is skewed to polar residues. GLFG repeat units lie at residues 112–115 (GLFG), 152–155 (GLFG), 177–180 (GLFG), 308–311 (GLFG), 335–338 (GLFG), 350–353 (GLFG), 381–384 (GLFG), 399–402 (GLFG), 435–438 (GLFG), and 521–524 (GLFG). Residues 565–584 (PGTGLFGSTQTNNATSNTGT) are compositionally biased toward polar residues. The segment at 565–685 (PGTGLFGSTQ…SSTTSQVAPT (121 aa)) is disordered. 4 GLFG repeats span residues 585 to 588 (GLFG), 611 to 614 (GLFG), 627 to 630 (GLFG), and 646 to 649 (GLFG). Over residues 588–600 (GSNNANTTNTGGS) the composition is skewed to low complexity. The span at 603-644 (NKPSTTTGGLFGNTTAQQPSTTTSGLFGASNTNNQAQTSNFG) shows a compositional bias: polar residues. The span at 653-663 (AGQQQQPLQAS) shows a compositional bias: low complexity. The segment covering 664-685 (IDQNPYGNNPLFSSTTSQVAPT) has biased composition (polar residues). Serine 724 is subject to Phosphoserine. The segment at 785–814 (QNGVKNGNDAKSDSKVQEKAPQNEADGSLK) is disordered. Basic and acidic residues predominate over residues 792–802 (NDAKSDSKVQE). In terms of domain architecture, Peptidase S59 spans 822-963 (SDDYWMKPSI…GKWIFKVQHF (142 aa)). The tract at residues 974 to 1020 (EENDMSSTSNEAGNLKKYDQPNLKVSGKNDSFVTHHTPGAFPNDSKN) is disordered. Phosphoserine is present on serine 1051. Positions 1082-1104 (KENNVPLSEDDLSNSSESSNESV) are disordered. The span at 1094–1104 (SNSSESSNESV) shows a compositional bias: low complexity.

This sequence belongs to the nucleoporin GLFG family. In terms of assembly, interacts (via G-L-F-G repeats) with rpn15/dss1. Interacts with raf1. Interacts with ned1. Post-translationally, nup189 is autocatalytically cleaved in nup98 and nup96.

It localises to the nucleus. The protein resides in the nuclear pore complex. Functionally, functions as a component of the nuclear pore complex (NPC). NPC components, collectively referred to as nucleoporins (NUPs), can play the role of both NPC structural components and of docking or interaction partners for transiently associated nuclear transport factors. Active directional transport is assured by both, a Phe-Gly (FG) repeat affinity gradient for these transport factors across the NPC and a transport cofactor concentration gradient across the nuclear envelope. Nup189 is autocatalytically cleaved in vivo in 2 polypeptides which assume different functions in the NPC. Nup98 as one of the FG repeat nucleoporins participates in karyopherin interactions and contains part of the autocatalytic cleavage activity. Nup96 as part of the NUP84 complex is involved in nuclear poly(A)+ RNA and tRNA export. The chain is Nucleoporin nup189 (nup189) from Schizosaccharomyces pombe (strain 972 / ATCC 24843) (Fission yeast).